The following is a 47-amino-acid chain: Putative protein PinH (47 aa).

One can recognise a Resolvase/invertase-type recombinase catalytic domain in the interval 1–47; sequence MWHLVVLLEELCERGINFRALAQSIFAQQWGDECCKSKTICDLKVIV.

This sequence belongs to the site-specific recombinase resolvase family.

The protein is Putative protein PinH (pinH) of Escherichia coli (strain K12).